Reading from the N-terminus, the 162-residue chain is Phospholipase A2 (162 aa).

The signal sequence occupies residues 1 to 22; it reads MKVLQMFFCVILLCVTSVLVEA. A propeptide spanning residues 23-35 is cleaved from the precursor; it reads KSTTKGDETASKR. Disulfide bonds link Cys60–Cys155, Cys62–Cys78, Cys77–Cys134, Cys84–Cys127, Cys94–Cys120, and Cys113–Cys125. The Ca(2+) site is built by Tyr61, Gly63, and Gly65. His81 is an active-site residue. Asp82 lines the Ca(2+) pocket. The active site involves Asp128.

The protein belongs to the phospholipase A2 family. Group I subfamily. D49 sub-subfamily. Ca(2+) serves as cofactor. In terms of tissue distribution, expressed both outside and in acontia, a specialised envenomation structure laden with batteries of venom-containing nematocysts found only in the superfamily Metridioidea.

The protein localises to the secreted. Its subcellular location is the nematocyst. It catalyses the reaction a 1,2-diacyl-sn-glycero-3-phosphocholine + H2O = a 1-acyl-sn-glycero-3-phosphocholine + a fatty acid + H(+). Its function is as follows. PLA2 catalyzes the calcium-dependent hydrolysis of the 2-acyl groups in 3-sn-phosphoglycerides. The protein is Phospholipase A2 of Calliactis polypus (Hermit crab anemone).